A 281-amino-acid chain; its full sequence is Probable endonuclease 4 (281 aa).

Zn(2+) contacts are provided by histidine 70, histidine 110, glutamate 146, aspartate 180, histidine 183, histidine 217, aspartate 230, histidine 232, and glutamate 262.

The protein belongs to the AP endonuclease 2 family. Zn(2+) serves as cofactor.

The enzyme catalyses Endonucleolytic cleavage to 5'-phosphooligonucleotide end-products.. Endonuclease IV plays a role in DNA repair. It cleaves phosphodiester bonds at apurinic or apyrimidinic (AP) sites, generating a 3'-hydroxyl group and a 5'-terminal sugar phosphate. This chain is Probable endonuclease 4, found in Nitratiruptor sp. (strain SB155-2).